Here is a 253-residue protein sequence, read N- to C-terminus: UPF0174 protein jhp_1494 (253 aa).

The protein belongs to the UPF0174 family.

The protein is UPF0174 protein jhp_1494 of Helicobacter pylori (strain J99 / ATCC 700824) (Campylobacter pylori J99).